The primary structure comprises 361 residues: Aminomethyltransferase (361 aa).

Belongs to the GcvT family. As to quaternary structure, the glycine cleavage system is composed of four proteins: P, T, L and H.

The enzyme catalyses N(6)-[(R)-S(8)-aminomethyldihydrolipoyl]-L-lysyl-[protein] + (6S)-5,6,7,8-tetrahydrofolate = N(6)-[(R)-dihydrolipoyl]-L-lysyl-[protein] + (6R)-5,10-methylene-5,6,7,8-tetrahydrofolate + NH4(+). Functionally, the glycine cleavage system catalyzes the degradation of glycine. The protein is Aminomethyltransferase of Herpetosiphon aurantiacus (strain ATCC 23779 / DSM 785 / 114-95).